The sequence spans 342 residues: N-acetyl-gamma-glutamyl-phosphate reductase (342 aa).

The active site involves Cys-147.

It belongs to the NAGSA dehydrogenase family. Type 1 subfamily.

It localises to the cytoplasm. It carries out the reaction N-acetyl-L-glutamate 5-semialdehyde + phosphate + NADP(+) = N-acetyl-L-glutamyl 5-phosphate + NADPH + H(+). The protein operates within amino-acid biosynthesis; L-arginine biosynthesis; N(2)-acetyl-L-ornithine from L-glutamate: step 3/4. Catalyzes the NADPH-dependent reduction of N-acetyl-5-glutamyl phosphate to yield N-acetyl-L-glutamate 5-semialdehyde. The chain is N-acetyl-gamma-glutamyl-phosphate reductase from Campylobacter jejuni subsp. jejuni serotype O:23/36 (strain 81-176).